A 361-amino-acid chain; its full sequence is Flagellar P-ring protein (361 aa).

The N-terminal stretch at 1-18 is a signal peptide; the sequence is MRKFTILLMLLLASSAQA.

This sequence belongs to the FlgI family. As to quaternary structure, the basal body constitutes a major portion of the flagellar organelle and consists of four rings (L,P,S, and M) mounted on a central rod.

The protein resides in the periplasm. The protein localises to the bacterial flagellum basal body. Functionally, assembles around the rod to form the L-ring and probably protects the motor/basal body from shearing forces during rotation. The sequence is that of Flagellar P-ring protein from Vibrio cholerae serotype O1 (strain ATCC 39541 / Classical Ogawa 395 / O395).